The following is a 66-amino-acid chain: Large ribosomal subunit protein bL35 (66 aa).

It belongs to the bacterial ribosomal protein bL35 family.

This is Large ribosomal subunit protein bL35 from Ruegeria sp. (strain TM1040) (Silicibacter sp.).